Here is a 264-residue protein sequence, read N- to C-terminus: Thymidylate synthase (264 aa).

Arg-21 is a binding site for dUMP. His-51 provides a ligand contact to (6R)-5,10-methylene-5,6,7,8-tetrahydrofolate. A dUMP-binding site is contributed by 126–127 (RR). Cys-146 acts as the Nucleophile in catalysis. DUMP-binding positions include 166-169 (RSGD), Asn-177, and 207-209 (HLY). (6R)-5,10-methylene-5,6,7,8-tetrahydrofolate is bound at residue Asp-169. Ala-263 contacts (6R)-5,10-methylene-5,6,7,8-tetrahydrofolate.

Belongs to the thymidylate synthase family. Bacterial-type ThyA subfamily. In terms of assembly, homodimer.

It localises to the cytoplasm. It catalyses the reaction dUMP + (6R)-5,10-methylene-5,6,7,8-tetrahydrofolate = 7,8-dihydrofolate + dTMP. It functions in the pathway pyrimidine metabolism; dTTP biosynthesis. Functionally, catalyzes the reductive methylation of 2'-deoxyuridine-5'-monophosphate (dUMP) to 2'-deoxythymidine-5'-monophosphate (dTMP) while utilizing 5,10-methylenetetrahydrofolate (mTHF) as the methyl donor and reductant in the reaction, yielding dihydrofolate (DHF) as a by-product. This enzymatic reaction provides an intracellular de novo source of dTMP, an essential precursor for DNA biosynthesis. The chain is Thymidylate synthase from Brevibacillus brevis (strain 47 / JCM 6285 / NBRC 100599).